The sequence spans 363 residues: Fructose-1,6-bisphosphate aldolase/phosphatase (363 aa).

Catalysis depends on Asp11, which acts as the Proton acceptor; for FBP phosphatase activity. 4 residues coordinate Mg(2+): Asp11, His18, Asp51, and Asp52. His18 contributes to the beta-D-fructose 1,6-bisphosphate binding site. Residue His18 participates in dihydroxyacetone phosphate binding. Tyr89 contacts beta-D-fructose 1,6-bisphosphate. Gln93 lines the Mg(2+) pocket. 102–103 (GN) is a beta-D-fructose 1,6-bisphosphate binding site. Residue Asp130 coordinates Mg(2+). Lys131 serves as a coordination point for beta-D-fructose 1,6-bisphosphate. Lys131 is a dihydroxyacetone phosphate binding site. Residue Tyr230 is the Proton donor/acceptor; for FBP aldolase activity of the active site. Positions 233, 234, and 235 each coordinate Mg(2+). Lys233 acts as the Schiff-base intermediate with DHAP; for FBP aldolase activity in catalysis. Beta-D-fructose 1,6-bisphosphate-binding positions include 243–244 (QK), Arg267, and Tyr348. Dihydroxyacetone phosphate is bound at residue Arg267.

This sequence belongs to the FBP aldolase/phosphatase family. As to quaternary structure, homooctamer; dimer of tetramers. Mg(2+) serves as cofactor.

It carries out the reaction beta-D-fructose 1,6-bisphosphate + H2O = beta-D-fructose 6-phosphate + phosphate. The enzyme catalyses beta-D-fructose 1,6-bisphosphate = D-glyceraldehyde 3-phosphate + dihydroxyacetone phosphate. Its pathway is carbohydrate biosynthesis; gluconeogenesis. Functionally, catalyzes two subsequent steps in gluconeogenesis: the aldol condensation of dihydroxyacetone phosphate (DHAP) and glyceraldehyde-3-phosphate (GA3P) to fructose-1,6-bisphosphate (FBP), and the dephosphorylation of FBP to fructose-6-phosphate (F6P). In Thermus thermophilus (strain ATCC BAA-163 / DSM 7039 / HB27), this protein is Fructose-1,6-bisphosphate aldolase/phosphatase.